A 322-amino-acid polypeptide reads, in one-letter code: HPr kinase/phosphorylase (322 aa).

Active-site residues include His146 and Lys167. Residue 161 to 168 (GDSGLGKS) coordinates ATP. Ser168 provides a ligand contact to Mg(2+). Asp185 functions as the Proton acceptor; for phosphorylation activity. Proton donor; for dephosphorylation activity in the catalytic mechanism. Positions 209-218 (LEVRGLGLLD) are important for the catalytic mechanism of both phosphorylation and dephosphorylation. Residue Glu210 coordinates Mg(2+). Arg250 is a catalytic residue. An important for the catalytic mechanism of dephosphorylation region spans residues 271–276 (QVAAGR).

It belongs to the HPrK/P family. Homohexamer. The cofactor is Mg(2+).

The catalysed reaction is [HPr protein]-L-serine + ATP = [HPr protein]-O-phospho-L-serine + ADP + H(+). It carries out the reaction [HPr protein]-O-phospho-L-serine + phosphate + H(+) = [HPr protein]-L-serine + diphosphate. Functionally, catalyzes the ATP- as well as the pyrophosphate-dependent phosphorylation of a specific serine residue in HPr, a phosphocarrier protein of the phosphoenolpyruvate-dependent sugar phosphotransferase system (PTS). HprK/P also catalyzes the pyrophosphate-producing, inorganic phosphate-dependent dephosphorylation (phosphorolysis) of seryl-phosphorylated HPr (P-Ser-HPr). The chain is HPr kinase/phosphorylase from Burkholderia multivorans (strain ATCC 17616 / 249).